Here is a 154-residue protein sequence, read N- to C-terminus: 6,7-dimethyl-8-ribityllumazine synthase (154 aa).

5-amino-6-(D-ribitylamino)uracil contacts are provided by residues phenylalanine 22, 56 to 58 (AFE), and 80 to 82 (AVI). 85 to 86 (AT) serves as a coordination point for (2S)-2-hydroxy-3-oxobutyl phosphate. Residue histidine 88 is the Proton donor of the active site. 5-amino-6-(D-ribitylamino)uracil is bound at residue phenylalanine 113. A (2S)-2-hydroxy-3-oxobutyl phosphate-binding site is contributed by arginine 127.

Belongs to the DMRL synthase family.

The catalysed reaction is (2S)-2-hydroxy-3-oxobutyl phosphate + 5-amino-6-(D-ribitylamino)uracil = 6,7-dimethyl-8-(1-D-ribityl)lumazine + phosphate + 2 H2O + H(+). It participates in cofactor biosynthesis; riboflavin biosynthesis; riboflavin from 2-hydroxy-3-oxobutyl phosphate and 5-amino-6-(D-ribitylamino)uracil: step 1/2. Its function is as follows. Catalyzes the formation of 6,7-dimethyl-8-ribityllumazine by condensation of 5-amino-6-(D-ribitylamino)uracil with 3,4-dihydroxy-2-butanone 4-phosphate. This is the penultimate step in the biosynthesis of riboflavin. The chain is 6,7-dimethyl-8-ribityllumazine synthase from Clostridium botulinum (strain ATCC 19397 / Type A).